A 377-amino-acid chain; its full sequence is Beta sliding clamp (377 aa).

Belongs to the beta sliding clamp family. In terms of assembly, forms a ring-shaped head-to-tail homodimer around DNA which binds and tethers DNA polymerases and other proteins to the DNA. The DNA replisome complex has a single clamp-loading complex (3 tau and 1 each of delta, delta', psi and chi subunits) which binds 3 Pol III cores (1 core on the leading strand and 2 on the lagging strand) each with a beta sliding clamp dimer. Additional proteins in the replisome are other copies of gamma, psi and chi, Ssb, DNA helicase and RNA primase.

Its subcellular location is the cytoplasm. Functionally, confers DNA tethering and processivity to DNA polymerases and other proteins. Acts as a clamp, forming a ring around DNA (a reaction catalyzed by the clamp-loading complex) which diffuses in an ATP-independent manner freely and bidirectionally along dsDNA. Initially characterized for its ability to contact the catalytic subunit of DNA polymerase III (Pol III), a complex, multichain enzyme responsible for most of the replicative synthesis in bacteria; Pol III exhibits 3'-5' exonuclease proofreading activity. The beta chain is required for initiation of replication as well as for processivity of DNA replication. The protein is Beta sliding clamp (dnaN) of Staphylococcus aureus (strain COL).